A 368-amino-acid polypeptide reads, in one-letter code: Ferrochelatase (368 aa).

His-209 and Glu-290 together coordinate Fe cation.

Belongs to the ferrochelatase family.

It localises to the cytoplasm. It catalyses the reaction heme b + 2 H(+) = protoporphyrin IX + Fe(2+). It functions in the pathway porphyrin-containing compound metabolism; protoheme biosynthesis; protoheme from protoporphyrin-IX: step 1/1. Its function is as follows. Catalyzes the ferrous insertion into protoporphyrin IX. This Herminiimonas arsenicoxydans protein is Ferrochelatase.